The primary structure comprises 106 residues: ADAAPTVSIFPPSTEQLATGGASVVCLMNNFYPRDISVKWKIDGTERRDGVLDSVTDQDSKDSTYSMSSTLSLTKADYESHNLYTCEVVHKTSSSPVVKSFNRNEC.

Residues proline 5–asparagine 102 enclose the Ig-like domain. Cysteine 26 and cysteine 86 are oxidised to a cystine.

The polypeptide is Ig kappa chain C region, B allele (Rattus norvegicus (Rat)).